Here is a 660-residue protein sequence, read N- to C-terminus: tRNA 5-methylaminomethyl-2-thiouridine biosynthesis bifunctional protein MnmC (660 aa).

The tRNA (mnm(5)s(2)U34)-methyltransferase stretch occupies residues 1-235; sequence MTITRHARID…KWEVLRGTFI (235 aa). The segment at 266 to 660 is FAD-dependent cmnm(5)s(2)U34 oxidoreductase; it reads IGAGLAGCAT…LRGLIRGGGK (395 aa).

In the N-terminal section; belongs to the methyltransferase superfamily. tRNA (mnm(5)s(2)U34)-methyltransferase family. The protein in the C-terminal section; belongs to the DAO family. FAD is required as a cofactor.

The protein localises to the cytoplasm. It carries out the reaction 5-aminomethyl-2-thiouridine(34) in tRNA + S-adenosyl-L-methionine = 5-methylaminomethyl-2-thiouridine(34) in tRNA + S-adenosyl-L-homocysteine + H(+). Its function is as follows. Catalyzes the last two steps in the biosynthesis of 5-methylaminomethyl-2-thiouridine (mnm(5)s(2)U) at the wobble position (U34) in tRNA. Catalyzes the FAD-dependent demodification of cmnm(5)s(2)U34 to nm(5)s(2)U34, followed by the transfer of a methyl group from S-adenosyl-L-methionine to nm(5)s(2)U34, to form mnm(5)s(2)U34. This is tRNA 5-methylaminomethyl-2-thiouridine biosynthesis bifunctional protein MnmC from Pseudomonas savastanoi pv. phaseolicola (strain 1448A / Race 6) (Pseudomonas syringae pv. phaseolicola (strain 1448A / Race 6)).